Here is a 134-residue protein sequence, read N- to C-terminus: Putative transposase InsN for insertion sequence element IS911A (134 aa).

It belongs to the transposase 8 family.

Functionally, involved in the transposition of the insertion sequence IS911. The chain is Putative transposase InsN for insertion sequence element IS911A (insN1) from Escherichia coli (strain K12).